The chain runs to 190 residues: Lipid A acyltransferase PagP (190 aa).

The N-terminal stretch at 1–18 is a signal peptide; the sequence is MKRLISCLTIICALNASA. Catalysis depends on residues H60, D103, and S104.

It belongs to the lipid A palmitoyltransferase family. Homodimer.

It localises to the cell outer membrane. It catalyses the reaction a lipid A + a 1,2-diacyl-sn-glycero-3-phosphocholine = a hepta-acyl lipid A + a 2-acyl-sn-glycero-3-phosphocholine. It carries out the reaction a lipid IVA + a 1,2-diacyl-sn-glycero-3-phosphocholine = a lipid IVB + a 2-acyl-sn-glycero-3-phosphocholine. The enzyme catalyses a lipid IIA + a 1,2-diacyl-sn-glycero-3-phosphocholine = a lipid IIB + a 2-acyl-sn-glycero-3-phosphocholine. In terms of biological role, transfers a fatty acid residue from the sn-1 position of a phospholipid to the N-linked hydroxyfatty acid chain on the proximal unit of lipid A or its precursors. The chain is Lipid A acyltransferase PagP from Legionella pneumophila subsp. pneumophila (strain Philadelphia 1 / ATCC 33152 / DSM 7513).